Here is a 379-residue protein sequence, read N- to C-terminus: Cytochrome b (379 aa).

Transmembrane regions (helical) follow at residues 33-53, 77-98, 113-133, and 178-198; these read FGSL…FLAM, WLIR…FIHV, WNIG…GYVL, and FFAF…VHLL. Histidine 83 and histidine 97 together coordinate heme b. Heme b contacts are provided by histidine 182 and histidine 196. Residue histidine 201 coordinates a ubiquinone. 4 helical membrane-spanning segments follow: residues 226–246, 288–308, 320–340, and 347–367; these read TKDL…ALFF, LGGV…PLLN, ITQV…WIGG, and FTMI…ILIP.

Belongs to the cytochrome b family. The cytochrome bc1 complex contains 11 subunits: 3 respiratory subunits (MT-CYB, CYC1 and UQCRFS1), 2 core proteins (UQCRC1 and UQCRC2) and 6 low-molecular weight proteins (UQCRH/QCR6, UQCRB/QCR7, UQCRQ/QCR8, UQCR10/QCR9, UQCR11/QCR10 and a cleavage product of UQCRFS1). This cytochrome bc1 complex then forms a dimer. Heme b is required as a cofactor.

It localises to the mitochondrion inner membrane. Functionally, component of the ubiquinol-cytochrome c reductase complex (complex III or cytochrome b-c1 complex) that is part of the mitochondrial respiratory chain. The b-c1 complex mediates electron transfer from ubiquinol to cytochrome c. Contributes to the generation of a proton gradient across the mitochondrial membrane that is then used for ATP synthesis. This Akodon spegazzinii (Spegazzini's grass mouse) protein is Cytochrome b (MT-CYB).